The primary structure comprises 431 residues: 4-hydroxy-3-methylbut-2-en-1-yl diphosphate synthase (flavodoxin) (431 aa).

Residues 1–12 (MNKLENPLRDDV) are compositionally biased toward basic and acidic residues. The interval 1 to 20 (MNKLENPLRDDVAGPAPRHQ) is disordered. C310, C313, C356, and E363 together coordinate [4Fe-4S] cluster.

Belongs to the IspG family. [4Fe-4S] cluster serves as cofactor.

It catalyses the reaction (2E)-4-hydroxy-3-methylbut-2-enyl diphosphate + oxidized [flavodoxin] + H2O + 2 H(+) = 2-C-methyl-D-erythritol 2,4-cyclic diphosphate + reduced [flavodoxin]. It participates in isoprenoid biosynthesis; isopentenyl diphosphate biosynthesis via DXP pathway; isopentenyl diphosphate from 1-deoxy-D-xylulose 5-phosphate: step 5/6. Its function is as follows. Converts 2C-methyl-D-erythritol 2,4-cyclodiphosphate (ME-2,4cPP) into 1-hydroxy-2-methyl-2-(E)-butenyl 4-diphosphate. This Rhodopseudomonas palustris (strain TIE-1) protein is 4-hydroxy-3-methylbut-2-en-1-yl diphosphate synthase (flavodoxin).